The sequence spans 126 residues: Glycine cleavage system H protein (126 aa).

One can recognise a Lipoyl-binding domain in the interval 22–104 (VATIGITEYA…YEKAWMVKVE (83 aa)). Residue Lys63 is modified to N6-lipoyllysine.

Belongs to the GcvH family. The glycine cleavage system is composed of four proteins: P, T, L and H. The cofactor is (R)-lipoate.

Functionally, the glycine cleavage system catalyzes the degradation of glycine. The H protein shuttles the methylamine group of glycine from the P protein to the T protein. Its function is as follows. Is also involved in protein lipoylation via its role as an octanoyl/lipoyl carrier protein intermediate. The chain is Glycine cleavage system H protein from Staphylococcus aureus (strain MSSA476).